A 474-amino-acid chain; its full sequence is Bifunctional protein HldE (474 aa).

The segment at 1 to 318 is ribokinase; that stretch reads MKLSMPRFDQ…RAIQREEGSE (318 aa). 194-197 contacts ATP; that stretch reads NLSE. Asp263 is an active-site residue. The tract at residues 343–474 is cytidylyltransferase; it reads FTNGCFDILH…AIVEKIRKSE (132 aa).

This sequence in the N-terminal section; belongs to the carbohydrate kinase PfkB family. It in the C-terminal section; belongs to the cytidylyltransferase family. Homodimer.

The catalysed reaction is D-glycero-beta-D-manno-heptose 7-phosphate + ATP = D-glycero-beta-D-manno-heptose 1,7-bisphosphate + ADP + H(+). It carries out the reaction D-glycero-beta-D-manno-heptose 1-phosphate + ATP + H(+) = ADP-D-glycero-beta-D-manno-heptose + diphosphate. It participates in nucleotide-sugar biosynthesis; ADP-L-glycero-beta-D-manno-heptose biosynthesis; ADP-L-glycero-beta-D-manno-heptose from D-glycero-beta-D-manno-heptose 7-phosphate: step 1/4. Its pathway is nucleotide-sugar biosynthesis; ADP-L-glycero-beta-D-manno-heptose biosynthesis; ADP-L-glycero-beta-D-manno-heptose from D-glycero-beta-D-manno-heptose 7-phosphate: step 3/4. Catalyzes the phosphorylation of D-glycero-D-manno-heptose 7-phosphate at the C-1 position to selectively form D-glycero-beta-D-manno-heptose-1,7-bisphosphate. In terms of biological role, catalyzes the ADP transfer from ATP to D-glycero-beta-D-manno-heptose 1-phosphate, yielding ADP-D-glycero-beta-D-manno-heptose. The chain is Bifunctional protein HldE from Pseudomonas fluorescens (strain Pf0-1).